A 118-amino-acid polypeptide reads, in one-letter code: uncharacterized protein (118 aa).

The first 26 residues, 1–26 (MTKLKMLSMLTVMIASLFIFSSQALA), serve as a signal peptide directing secretion. The SH3b domain maps to 30 to 104 (FTVSTSSGAP…VNIGYVSDTY (75 aa)).

The protein to B.subtilis YraI.

This is an uncharacterized protein from Bacillus subtilis (strain 168).